The chain runs to 146 residues: Inclusion membrane protein D (146 aa).

The next 2 helical transmembrane spans lie at 38 to 58 and 68 to 88; these read AAVA…GLLF and VVAA…ALVG.

Its subcellular location is the secreted. It is found in the host vacuole. It localises to the host pathogen-containing vacuole. The protein resides in the host pathogen-containing vacuole membrane. In terms of biological role, host inclusion membrane protein probably involved in early modification events of the chlamydial inclusion. The protein is Inclusion membrane protein D of Chlamydia trachomatis serovar L2 (strain ATCC VR-902B / DSM 19102 / 434/Bu).